Here is a 64-residue protein sequence, read N- to C-terminus: Outer envelope membrane protein 7 (64 aa).

At 1–11 (MGKTSGAKQAT) the chain is on the chloroplast intermembrane side. The helical transmembrane segment at 12 to 32 (VVVAAMALGWLAIEIAFKPFL) threads the bilayer. Residues 29–35 (KPFLDKF) carry the AKR2A-binding sequence (ABS) required for chloroplast outer envelope membrane targeting motif. Residues 33–64 (DKFRSSIDKSDPTKDPDDFDTAATATTSKEGL) are Cytoplasmic-facing. Basic and acidic residues predominate over residues 39–48 (IDKSDPTKDP). The segment at 39 to 64 (IDKSDPTKDPDDFDTAATATTSKEGL) is disordered. Residues 53-64 (TAATATTSKEGL) are compositionally biased toward low complexity.

In terms of assembly, interacts with AKR2A. Confined to green tissues.

It localises to the plastid. Its subcellular location is the chloroplast outer membrane. This is Outer envelope membrane protein 7 from Arabidopsis thaliana (Mouse-ear cress).